Consider the following 427-residue polypeptide: MWMLAALLLLVPRSGKAATLEKPVLTLHPPWTTIFKGERVTLRCDGYHPLLLELRPISTLWYLGHVLLPSHKKSIEVQAPGVYRCQTRGAPVSDPIHLSVSNDWLILQVPYAAVFEGEPLVMRCRGWYDKVVYKLHYYHDGQAVRYFHSSTNYTVLQARASDSGHYQCSGTMRIPVESAPMFSSKVAVTVQELFQTPVLRTLSPQEARGRVVLRCETRLHPQKRDTPLQFAFYKYSRPVRRFDWGAEYTVPESEVEELESYWCEAATTSRSVRKRSPWLQLPGRGPVLDLASTTAPVAQAAALGPGDKPLSFRKTPVSRSVQSVTSIPNSTFAGLQFPAGHVATAGPHACAPLPASAEQSREALQPKVDLLLREMQLLKGLLSRVVLGLKDPQALHELTETPETPNSHVTVNPATPETTVMEGRVDS.

The signal sequence occupies residues 1–17; the sequence is MWMLAALLLLVPRSGKA. 2 consecutive Ig-like C2-type domains span residues 23 to 101 and 103 to 189; these read PVLT…LSVS and DWLI…VAVT. 2 cysteine pairs are disulfide-bonded: Cys-44/Cys-85 and Cys-124/Cys-168. Residue Asn-152 is glycosylated (N-linked (GlcNAc...) asparagine). Positions 401–418 are enriched in polar residues; that stretch reads TPETPNSHVTVNPATPET. A disordered region spans residues 401 to 427; sequence TPETPNSHVTVNPATPETTVMEGRVDS.

In terms of tissue distribution, expressed at low levels. Expressed in B-lymphocytes. Detected in spleen, lymph node, kidney, lung and brain.

Its subcellular location is the cytoplasm. The protein localises to the endoplasmic reticulum. The chain is Fc receptor-like B (Fcrlb) from Mus musculus (Mouse).